Consider the following 325-residue polypeptide: Glutarate 2-hydroxylase (325 aa).

Residues H160, D162, and H292 each contribute to the Fe cation site.

The protein belongs to the glutarate hydroxylase family. Homotetramer. It depends on Fe(2+) as a cofactor.

It carries out the reaction glutarate + 2-oxoglutarate + O2 = (S)-2-hydroxyglutarate + succinate + CO2. Its pathway is amino-acid degradation. Functionally, acts as an alpha-ketoglutarate-dependent dioxygenase catalyzing hydroxylation of glutarate (GA) to L-2-hydroxyglutarate (L2HG). Functions in a L-lysine degradation pathway that proceeds via cadaverine, glutarate and L-2-hydroxyglutarate. This chain is Glutarate 2-hydroxylase, found in Salmonella typhimurium (strain SL1344).